Reading from the N-terminus, the 133-residue chain is Membrane protein FAM174B (133 aa).

The first 19 residues, 1 to 19 (MWLYTFAVALIVIAQEING), serve as a signal peptide directing secretion. The Extracellular segment spans residues 20 to 67 (EPHTRPSSATPLNATLPPQEEGSAQNTTDAAVGSRLSTILRDLPTIKN). The tract at residues 22-47 (HTRPSSATPLNATLPPQEEGSAQNTT) is disordered. 3 N-linked (GlcNAc...) asparagine glycosylation sites follow: N32, N45, and N67. Residues 68–88 (ISIFICVLTTLLITCLVIKIC) form a helical membrane-spanning segment. Topologically, residues 89–133 (RSARKIRKTRKYDIITTPAERVEMAPLNEENDEEDDSTLFDVKYR) are cytoplasmic. A disordered region spans residues 113-133 (APLNEENDEEDDSTLFDVKYR). The span at 117 to 126 (EENDEEDDST) shows a compositional bias: acidic residues.

It belongs to the FAM174 family.

The protein localises to the cell membrane. Its subcellular location is the golgi apparatus. Essential for Golgi structural integrity. The protein is Membrane protein FAM174B (Fam174b) of Danio rerio (Zebrafish).